Here is a 260-residue protein sequence, read N- to C-terminus: tRNA pseudouridine synthase A (260 aa).

Aspartate 51 serves as the catalytic Nucleophile. Position 109 (tyrosine 109) interacts with substrate.

This sequence belongs to the tRNA pseudouridine synthase TruA family. As to quaternary structure, homodimer.

It carries out the reaction uridine(38/39/40) in tRNA = pseudouridine(38/39/40) in tRNA. Formation of pseudouridine at positions 38, 39 and 40 in the anticodon stem and loop of transfer RNAs. The sequence is that of tRNA pseudouridine synthase A from Methylibium petroleiphilum (strain ATCC BAA-1232 / LMG 22953 / PM1).